The following is a 226-amino-acid chain: Cytidylate kinase (226 aa).

10–18 (GPASSGKST) lines the ATP pocket.

Belongs to the cytidylate kinase family. Type 1 subfamily.

The protein localises to the cytoplasm. The enzyme catalyses CMP + ATP = CDP + ADP. It carries out the reaction dCMP + ATP = dCDP + ADP. The chain is Cytidylate kinase from Streptococcus uberis (strain ATCC BAA-854 / 0140J).